A 141-amino-acid chain; its full sequence is MMPIKVEIVSPEKVLFSRAVDMALIPGLEGDIAAMPDHAPMMLLLRGGVVELHQDGAVTDRFFVAGGFADMTETSCTILADQATALSDLSVEAAQARLAELEASYDKADKMNVPVLDLLMAKMQSARAEIEAAGGPAVQGA.

The protein belongs to the ATPase epsilon chain family. As to quaternary structure, F-type ATPases have 2 components, CF(1) - the catalytic core - and CF(0) - the membrane proton channel. CF(1) has five subunits: alpha(3), beta(3), gamma(1), delta(1), epsilon(1). CF(0) has three main subunits: a, b and c.

The protein resides in the cell inner membrane. In terms of biological role, produces ATP from ADP in the presence of a proton gradient across the membrane. This chain is ATP synthase epsilon chain, found in Gluconacetobacter diazotrophicus (strain ATCC 49037 / DSM 5601 / CCUG 37298 / CIP 103539 / LMG 7603 / PAl5).